A 272-amino-acid polypeptide reads, in one-letter code: NAD kinase (272 aa).

Catalysis depends on Asp50, which acts as the Proton acceptor. NAD(+) contacts are provided by residues 50–51 (DG), 126–127 (NE), Arg152, Asp154, 165–170 (TAYNKS), and Ala189.

It belongs to the NAD kinase family. It depends on a divalent metal cation as a cofactor.

It localises to the cytoplasm. It carries out the reaction NAD(+) + ATP = ADP + NADP(+) + H(+). Functionally, involved in the regulation of the intracellular balance of NAD and NADP, and is a key enzyme in the biosynthesis of NADP. Catalyzes specifically the phosphorylation on 2'-hydroxyl of the adenosine moiety of NAD to yield NADP. The polypeptide is NAD kinase (Streptococcus pneumoniae (strain 70585)).